Consider the following 628-residue polypeptide: Nucleoside-triphosphatase 2 (628 aa).

An N-terminal signal peptide occupies residues 1 to 25 (MWLPVYVPLLLVFGVSLSLPHGSLG). E236 (proton acceptor) is an active-site residue. N-linked (GlcNAc...) asparagine glycosylation is present at N432.

Belongs to the GDA1/CD39 NTPase family. As to quaternary structure, homotetramer.

It localises to the secreted. The protein resides in the parasitophorous vacuole. The catalysed reaction is a ribonucleoside 5'-triphosphate + H2O = a ribonucleoside 5'-diphosphate + phosphate + H(+). Functionally, may perform an important processing step in the conversion of high energy nucleotides prior to uptake by the parasite. NTPAse-II has a specific activity 4.5-fold lower than NTPAse-I in hydrolysis of ATP. The primary difference between these isozymes lies in their ability to hydrolyze nucleoside triphosphate versus diphosphate substrates. While NTPAse-II hydrolyzes ATP to ADP and ADP to AMP at almost the same rate, NTPAse-I hydrolyzes ADP to AMP at a much slower rate (0.7% of the rate for ATP). This chain is Nucleoside-triphosphatase 2 (NTP1), found in Toxoplasma gondii.